The following is a 103-amino-acid chain: Small ribosomal subunit protein uS10 (103 aa).

Belongs to the universal ribosomal protein uS10 family. Part of the 30S ribosomal subunit.

Functionally, involved in the binding of tRNA to the ribosomes. The protein is Small ribosomal subunit protein uS10 of Ralstonia pickettii (strain 12J).